The following is a 628-amino-acid chain: Probable alpha-L-arabinofuranosidase A (628 aa).

Positions 1–25 (MVAFSALSGVSALSLLLCLVQHAHG) are cleaved as a signal peptide. Residues Asn36, Asn51, Asn74, Asn152, Asn171, Asn260, Asn359, and Asn493 are each glycosylated (N-linked (GlcNAc...) asparagine).

Belongs to the glycosyl hydrolase 51 family.

The protein localises to the secreted. The enzyme catalyses Hydrolysis of terminal non-reducing alpha-L-arabinofuranoside residues in alpha-L-arabinosides.. It participates in glycan metabolism; L-arabinan degradation. Alpha-L-arabinofuranosidase involved in the degradation of arabinoxylan, a major component of plant hemicellulose. Acts only on small linear 1,5-alpha-linked L-arabinofuranosyl oligosaccharides. This is Probable alpha-L-arabinofuranosidase A (abfA) from Aspergillus awamori (Black koji mold).